The chain runs to 153 residues: Hemoglobin-3 (153 aa).

An N-acetylserine modification is found at S2. The region spanning 4-150 (GLTGPQKAAL…ICRVQGDFMK (147 aa)) is the Globin domain. H99 is a heme b binding site.

This sequence belongs to the globin family. In terms of assembly, homotetramer.

It localises to the cytoplasm. This Phacoides pectinatus (Thick lucine) protein is Hemoglobin-3.